The sequence spans 141 residues: Putative pre-16S rRNA nuclease (141 aa).

The protein belongs to the YqgF nuclease family.

Its subcellular location is the cytoplasm. In terms of biological role, could be a nuclease involved in processing of the 5'-end of pre-16S rRNA. The sequence is that of Putative pre-16S rRNA nuclease from Aliivibrio fischeri (strain MJ11) (Vibrio fischeri).